The following is a 1912-amino-acid chain: Methylcytosine dioxygenase TET2 (1912 aa).

Residues 1–11 show a composition bias toward basic and acidic residues; sequence MEQDRTTHAEG. Positions 1–86 are disordered; that stretch reads MEQDRTTHAE…PHEDRGYSRC (86 aa). Phosphoserine is present on residues Ser15 and Ser23. Residues 53 to 74 show a composition bias toward polar residues; sequence TKWQSSQSCYGISHMKGSQSSH. Residues Ser76 and Ser97 each carry the phosphoserine modification. 8 disordered regions span residues 112–166, 340–359, 367–388, 429–470, 673–723, 832–862, 907–966, and 1009–1052; these read LDQK…FPTR, DRNL…QKET, SSKF…QSLL, IDHQ…PEKS, PQTQ…DKQR, EQAQ…AEAA, QEQQ…NGQP, and ESEN…EGCN. Composition is skewed to polar residues over residues 135–158, 340–353, 367–387, 434–447, and 673–689; these read SRQP…QESS, DRNL…SEQY, SSKF…SQSL, KTSS…SVHT, and PQTQ…SNFP. The span at 690–701 shows a compositional bias: low complexity; sequence QICQQQQQQQLQ. Composition is skewed to polar residues over residues 707–719 and 832–844; these read QMPQ…QGSN and EQAQ…SSLQ. Over residues 907 to 921 the composition is skewed to low complexity; sequence QEQQQTQQSQPGHNQ. Composition is skewed to polar residues over residues 944–966 and 1036–1046; these read PQEN…NGQP and SDTPGEQSQNG. Position 1036 is a phosphoserine (Ser1036). Zn(2+) contacts are provided by Cys1048, Cys1106, His1132, and Cys1134. Arg1174 contacts 2-oxoglutarate. Zn(2+)-binding residues include Cys1184, Cys1186, Cys1202, and Cys1211. The tract at residues 1203-1216 is interaction with DNA; the sequence is SWSMYYNGCKFARS. Lys1212 participates in a covalent cross-link: Glycyl lysine isopeptide (Lys-Gly) (interchain with G-Cter in ubiquitin). A Zn(2+)-binding site is contributed by Cys1271. Residue Cys1287 coordinates 2-oxoglutarate. A Zn(2+)-binding site is contributed by His1293. Fe cation-binding residues include His1295 and Asp1297. Asn1300 serves as a coordination point for substrate. His1329 provides a ligand contact to 2-oxoglutarate. Disordered stretches follow at residues 1379 to 1414 and 1444 to 1514; these read KKKA…SSSH and LQRH…HTSD. Basic residues predominate over residues 1387-1396; sequence AKTKKAARKR. Residues 1456–1473 are compositionally biased toward pro residues; that stretch reads QPQPPQPQPQTTPQPQPQ. The segment covering 1480-1512 has biased composition (polar residues); it reads GNSQSVGSHCSGSTSVYTRQPTPHSPYPSSAHT. His1795 is a Fe cation binding site. 1810 to 1812 lines the 2-oxoglutarate pocket; sequence RIS. 1816–1818 is a binding site for substrate; sequence YRH. Position 1826 (His1826) interacts with Zn(2+). Over residues 1842-1866 the composition is skewed to basic and acidic residues; that stretch reads EEECGKNGSDHVSQKNHGKQEKREP. The interval 1842 to 1871 is disordered; sequence EEECGKNGSDHVSQKNHGKQEKREPTGPQE.

It belongs to the TET family. In terms of assembly, interacts with HCFC1. Interacts with OGT. Interacts with PROSER1; this interaction mediates TET2 O-GlcNAcylation and stability by promoting the interaction between OGT and TET2. Directly interacts (via C-terminus) with the DCAF1 component of the CRL4(VprBP) E3 ubiquitin-protein ligase complex. Requires Fe(2+) as cofactor. Zn(2+) serves as cofactor. In terms of processing, may be glycosylated. It is unclear whether interaction with OGT leads to GlcNAcylation. According to a report, it is GlcNAcylated by OGT. In contrast, another group reports no GlcNAcylation by OGT in human ortholog. Post-translationally, monoubiquitinated at Lys-1212 by the DCX (DDB1-CUL4-X-box) E3 ubiquitin-protein ligase complex called CRL4(VprBP) or CUL4A-RBX1-DDB1-DCAF1/VPRBP complex; this modification promotes binding to DNA. Acetylated. As to expression, expressed in the brain, kidney, heart, lung, muscle and stomach. Expressed in germinal vesicle (GV) stage and MII-stage oocytes and in early embryos. Present in embryonic stem cells (ES cells).

The protein localises to the nucleus. Its subcellular location is the chromosome. It carries out the reaction a 5-methyl-2'-deoxycytidine in DNA + 2-oxoglutarate + O2 = a 5-hydroxymethyl-2'-deoxycytidine in DNA + succinate + CO2. The catalysed reaction is a 5-hydroxymethyl-2'-deoxycytidine in DNA + 2-oxoglutarate + O2 = a 5-formyl-2'-deoxycytidine in DNA + succinate + CO2 + H2O. The enzyme catalyses a 5-formyl-2'-deoxycytidine in DNA + 2-oxoglutarate + O2 = a 5-carboxyl-2'-deoxycytidine in DNA + succinate + CO2 + H(+). In terms of biological role, dioxygenase that catalyzes the conversion of the modified genomic base 5-methylcytosine (5mC) into 5-hydroxymethylcytosine (5hmC) and plays a key role in active DNA demethylation. Has a preference for 5-hydroxymethylcytosine in CpG motifs. Also mediates subsequent conversion of 5hmC into 5-formylcytosine (5fC), and conversion of 5fC to 5-carboxylcytosine (5caC). Conversion of 5mC into 5hmC, 5fC and 5caC probably constitutes the first step in cytosine demethylation. Methylation at the C5 position of cytosine bases is an epigenetic modification of the mammalian genome which plays an important role in transcriptional regulation. In addition to its role in DNA demethylation, also involved in the recruitment of the O-GlcNAc transferase OGT to CpG-rich transcription start sites of active genes, thereby promoting histone H2B GlcNAcylation by OGT. The protein is Methylcytosine dioxygenase TET2 (Tet2) of Mus musculus (Mouse).